The chain runs to 97 residues: Co-chaperonin GroES (97 aa).

It belongs to the GroES chaperonin family. As to quaternary structure, heptamer of 7 subunits arranged in a ring. Interacts with the chaperonin GroEL.

Its subcellular location is the cytoplasm. Its function is as follows. Together with the chaperonin GroEL, plays an essential role in assisting protein folding. The GroEL-GroES system forms a nano-cage that allows encapsulation of the non-native substrate proteins and provides a physical environment optimized to promote and accelerate protein folding. GroES binds to the apical surface of the GroEL ring, thereby capping the opening of the GroEL channel. This is Co-chaperonin GroES from Enterobacter sp. (strain 638).